The following is a 332-amino-acid chain: 2,3-diketo-L-gulonate reductase (332 aa).

His44 acts as the Proton donor in catalysis. NAD(+) contacts are provided by residues 168–174, 224–225, and 304–306; these read ITMVDMS, WK, and GHE.

Belongs to the LDH2/MDH2 oxidoreductase family. DlgD subfamily. As to quaternary structure, homodimer.

It is found in the cytoplasm. The catalysed reaction is 3-dehydro-L-gulonate + NAD(+) = 2,3-dioxo-L-gulonate + NADH + H(+). The enzyme catalyses 3-dehydro-L-gulonate + NADP(+) = 2,3-dioxo-L-gulonate + NADPH + H(+). Functionally, catalyzes the reduction of 2,3-diketo-L-gulonate in the presence of NADH, to form 3-keto-L-gulonate. In Escherichia fergusonii (strain ATCC 35469 / DSM 13698 / CCUG 18766 / IAM 14443 / JCM 21226 / LMG 7866 / NBRC 102419 / NCTC 12128 / CDC 0568-73), this protein is 2,3-diketo-L-gulonate reductase.